Reading from the N-terminus, the 255-residue chain is MLPTYERFSDPKSVLFRLPFARLALVALSLPLGGFFFCVIWSLTFDFVRSTYTHCDVTNYLPSVSAAIGNYEPQKTVWRLAIFLHLPLRLAVAKIYLEHYREHIRRSRRLLGILACFLNVVEDLALFCLSFWTSADHYETHRNAFVVFIACSECYMLVSYLLNRNIQKTVLLPHEEKSLRYKRNLFLVNVIAFGLAGYCFVRHNSHCEAGVYTFFALFEYIVVLTNMGFHMTSYWDFYALNVVCDAKHGLYLSQS.

The next 5 membrane-spanning stretches (helical) occupy residues 23–43 (LALVALSLPLGGFFFCVIWSL), 111–131 (LGILACFLNVVEDLALFCLSF), 143–163 (NAFVVFIACSECYMLVSYLLN), 185–205 (LFLVNVIAFGLAGYCFVRHNS), and 209–229 (AGVYTFFALFEYIVVLTNMGF).

Belongs to the PGAP2 family.

Its subcellular location is the golgi apparatus membrane. It is found in the endoplasmic reticulum membrane. Its function is as follows. Involved in the lipid remodeling steps of GPI-anchor maturation. Required for stable expression of GPI-anchored proteins at the cell surface. This is Post-GPI attachment to proteins factor 2 from Drosophila melanogaster (Fruit fly).